Consider the following 262-residue polypeptide: 14-3-3 protein I (262 aa).

Belongs to the 14-3-3 family. Homodimer. Forms a complex composed of CDPK1, PKA regulatory subunit PKAr and 14-3-3I; the complex is formed in merozoites in response to low extracellular level of K(+) and may play a role in microneme secretion. Interacts with CDPK1 (when phosphorylated) in a Ca(2+)-independent manner; the interaction does not regulate CDPK1 catalytic activity but is required for merozoite invasion of host erythrocytes. Interacts with PKA regulatory subunit PKAr (when phosphorylated) in a Ca(2+)-dependent manner. Interacts with histone H3 (when phosphorylated at 'Ser-28' or when phosphorylated at 'Ser-28' and 'Ser-32').

It is found in the cell membrane. It localises to the cytoplasm. The protein localises to the nucleus. Adapter protein which binds to its partners, usually via a phosphoserine or phosphothreonine motif. Binding generally results in the modulation of the activity and/or cellular localization of the binding partner. Via its interaction with CDPK1 and PKAr, involved in merozoite microneme secretion and thus in merozoite invasion of host erythrocytes. The polypeptide is 14-3-3 protein I (Plasmodium falciparum (isolate 3D7)).